We begin with the raw amino-acid sequence, 330 residues long: Methionyl-tRNA formyltransferase (330 aa).

A (6S)-5,6,7,8-tetrahydrofolate-binding site is contributed by 117-120; it reads SLLP.

This sequence belongs to the Fmt family.

It catalyses the reaction L-methionyl-tRNA(fMet) + (6R)-10-formyltetrahydrofolate = N-formyl-L-methionyl-tRNA(fMet) + (6S)-5,6,7,8-tetrahydrofolate + H(+). In terms of biological role, attaches a formyl group to the free amino group of methionyl-tRNA(fMet). The formyl group appears to play a dual role in the initiator identity of N-formylmethionyl-tRNA by promoting its recognition by IF2 and preventing the misappropriation of this tRNA by the elongation apparatus. The protein is Methionyl-tRNA formyltransferase of Verminephrobacter eiseniae (strain EF01-2).